The following is a 456-amino-acid chain: Antizyme inhibitor 2 (456 aa).

Cysteine 357 acts as the Proton donor; shared with dimeric partner in catalysis.

It belongs to the Orn/Lys/Arg decarboxylase class-II family. ODC antizyme inhibitor subfamily. Monomer. Interacts with OAZ1; this interaction disrupts the interaction between the antizyme and ODC1. Does not form a heterodimer with ODC1.

Its subcellular location is the nucleus. The protein resides in the cytoplasm. It is found in the perinuclear region. It localises to the membrane. The protein localises to the cytoplasmic vesicle. Its subcellular location is the endoplasmic reticulum-Golgi intermediate compartment. The protein resides in the golgi apparatus. It is found in the cis-Golgi network. It localises to the trans-Golgi network. The protein localises to the cytoplasmic granule. Its subcellular location is the cell projection. The protein resides in the axon. It is found in the dendrite. It localises to the perikaryon. Functionally, antizyme inhibitor (AZI) protein that positively regulates ornithine decarboxylase (ODC) activity and polyamine uptake. AZI is an enzymatically inactive ODC homolog that counteracts the negative effect of ODC antizyme (AZ) on ODC activity by competing with ODC for antizyme-binding. Inhibits antizyme-dependent ODC degradation and releases ODC monomers from their inactive complex with antizymes, leading to formation of the catalytically active ODC homodimer and restoring polyamine production. Participates in the morphological integrity of the trans-Golgi network (TGN) and functions as a regulator of intracellular secretory vesicle trafficking. The chain is Antizyme inhibitor 2 (azin2) from Xenopus laevis (African clawed frog).